The chain runs to 120 residues: UPF0715 membrane protein YwlA (120 aa).

4 helical membrane-spanning segments follow: residues 3–23, 26–46, 63–83, and 95–115; these read YNYTVLLSAFTMSVLYSVIYI, FIIAALITMAFYFLFPYLIFA, LYLLYYLAAAFIANAIIFGML, and AFYLFAVLTALIYWIWDSVLL.

It belongs to the UPF0715 family.

It localises to the cell membrane. This Bacillus subtilis (strain 168) protein is UPF0715 membrane protein YwlA (ywlA).